The primary structure comprises 487 residues: N-succinylglutamate 5-semialdehyde dehydrogenase (487 aa).

NAD(+) is bound at residue 221–226 (GSSRTG). Residues E244 and C278 contribute to the active site.

The protein belongs to the aldehyde dehydrogenase family. AstD subfamily.

It catalyses the reaction N-succinyl-L-glutamate 5-semialdehyde + NAD(+) + H2O = N-succinyl-L-glutamate + NADH + 2 H(+). It participates in amino-acid degradation; L-arginine degradation via AST pathway; L-glutamate and succinate from L-arginine: step 4/5. In terms of biological role, catalyzes the NAD-dependent reduction of succinylglutamate semialdehyde into succinylglutamate. The polypeptide is N-succinylglutamate 5-semialdehyde dehydrogenase (astD) (Pseudomonas aeruginosa (strain ATCC 15692 / DSM 22644 / CIP 104116 / JCM 14847 / LMG 12228 / 1C / PRS 101 / PAO1)).